The following is a 259-amino-acid chain: Phosphate import ATP-binding protein PstB (259 aa).

The region spanning Ala10–Ile254 is the ABC transporter domain. Gly43–Ser50 lines the ATP pocket.

This sequence belongs to the ABC transporter superfamily. Phosphate importer (TC 3.A.1.7) family. The complex is composed of two ATP-binding proteins (PstB), two transmembrane proteins (PstC and PstA) and a solute-binding protein (PstS).

The protein resides in the cell inner membrane. The catalysed reaction is phosphate(out) + ATP + H2O = ADP + 2 phosphate(in) + H(+). Functionally, part of the ABC transporter complex PstSACB involved in phosphate import. Responsible for energy coupling to the transport system. This chain is Phosphate import ATP-binding protein PstB, found in Methylobacillus flagellatus (strain ATCC 51484 / DSM 6875 / VKM B-1610 / KT).